The chain runs to 447 residues: Probable glycine dehydrogenase (decarboxylating) subunit 1 (447 aa).

This sequence belongs to the GcvP family. N-terminal subunit subfamily. The glycine cleavage system is composed of four proteins: P, T, L and H. In this organism, the P 'protein' is a heterodimer of two subunits.

It catalyses the reaction N(6)-[(R)-lipoyl]-L-lysyl-[glycine-cleavage complex H protein] + glycine + H(+) = N(6)-[(R)-S(8)-aminomethyldihydrolipoyl]-L-lysyl-[glycine-cleavage complex H protein] + CO2. The glycine cleavage system catalyzes the degradation of glycine. The P protein binds the alpha-amino group of glycine through its pyridoxal phosphate cofactor; CO(2) is released and the remaining methylamine moiety is then transferred to the lipoamide cofactor of the H protein. This is Probable glycine dehydrogenase (decarboxylating) subunit 1 from Bacillus anthracis (strain A0248).